The sequence spans 187 residues: Ribosome-recycling factor (187 aa).

The protein belongs to the RRF family.

Its subcellular location is the cytoplasm. In terms of biological role, responsible for the release of ribosomes from messenger RNA at the termination of protein biosynthesis. May increase the efficiency of translation by recycling ribosomes from one round of translation to another. The polypeptide is Ribosome-recycling factor (Paracoccus denitrificans (strain Pd 1222)).